A 126-amino-acid chain; its full sequence is Fluoride-specific ion channel FluC (126 aa).

The next 4 helical transmembrane spans lie at 4–24 (FAILGFIALGGAFGACSRYLV), 38–58 (YGTLTVNVVGSFIMGLLIAAF), 71–91 (IIGLGFLGALTTFSTFSMDNV), and 104–124 (LNVVLNVTLSITAAWVGFQLL). Na(+) is bound by residues Gly78 and Thr81.

The protein belongs to the fluoride channel Fluc/FEX (TC 1.A.43) family.

It is found in the cell inner membrane. The catalysed reaction is fluoride(in) = fluoride(out). With respect to regulation, na(+) is not transported, but it plays an essential structural role and its presence is essential for fluoride channel function. Its function is as follows. Fluoride-specific ion channel. Important for reducing fluoride concentration in the cell, thus reducing its toxicity. This Vibrio vulnificus (strain CMCP6) protein is Fluoride-specific ion channel FluC.